Consider the following 658-residue polypeptide: CXXC-type zinc finger protein 1 (658 aa).

Methionine 1 is subject to N-acetylmethionine. Acidic residues predominate over residues 1–14; that stretch reads MEGDASDPEPPDAG. The disordered stretch occupies residues 1 to 20; it reads MEGDASDPEPPDAGEDSKSE. Phosphoserine is present on residues serine 6 and serine 19. A PHD-type zinc finger spans residues 28-76; sequence YCICRKPDINCFMIGCDNCNEWFHGDCIRITEKMAKAIREWYCRECREK. Positions 84 to 164 are disordered; that stretch reads YRHKKSRERD…HQQQQQQQQI (81 aa). Residues 90–120 are compositionally biased toward basic and acidic residues; it reads RERDSSERDGSEPRDEGGGRKRPAPDPDLQR. Positions 153 to 163 are enriched in low complexity; the sequence is QHHQQQQQQQQ. The CXXC-type zinc-finger motif lies at 162-211; sequence QQIKRSARMCGECEACRRTEDCGHCDFCRDMKKFGGPNKIRQKCRLRQCQ. Residues cysteine 171, cysteine 174, cysteine 177, cysteine 183, cysteine 186, cysteine 189, cysteine 205, and cysteine 210 each contribute to the Zn(2+) site. Disordered regions lie at residues 221–285 and 327–373; these read FPSS…SDED and VKVK…DPAS. Serine 226 is subject to Phosphoserine. Threonine 229 is modified (phosphothreonine). Lysine 252 is covalently cross-linked (Glycyl lysine isopeptide (Lys-Gly) (interchain with G-Cter in SUMO2)). Residues 327–336 show a composition bias toward basic residues; the sequence is VKVKHVKRRE. Positions 337–347 are enriched in basic and acidic residues; sequence KKSEKKKDERY. The span at 348–360 shows a compositional bias: basic residues; sequence KRHRQKQKHKDKW. Residues 361-370 are compositionally biased toward basic and acidic residues; the sequence is KHPERADAKD. Residues 428-470 are a coiled coil; that stretch reads GKKLLERIRREQQSARTRLQEMERRFHELEAIILRAKQQAVRE.

In terms of assembly, component of the SET1 complex, at least composed of the catalytic subunit (SETD1A or SETD1B), WDR5, WDR82, RBBP5, ASH2L/ASH2, CXXC1/CFP1, HCFC1 and DPY30. Interacts with SETD1A. Interacts with ZNF335. Interacts with PRDM9; this interaction does not link PRDM9-activated recombination hotspot sites with DSB machinery and is not required for the hotspot recognition pathway. Interacts with histone H3K4me3. Post-translationally, may be regulated by proteolysis.

The protein localises to the nucleus speckle. It is found in the nucleus. Functionally, transcriptional activator that exhibits a unique DNA binding specificity for CpG unmethylated motifs with a preference for CpGG. In Bos taurus (Bovine), this protein is CXXC-type zinc finger protein 1 (CXXC1).